The chain runs to 554 residues: Phenylalanine--tRNA ligase beta subunit (554 aa).

The B5 domain maps to 276–351 (LTPKSRIISV…INYGYEKFDG (76 aa)). The Mg(2+) site is built by D329, D335, E338, and E339.

This sequence belongs to the phenylalanyl-tRNA synthetase beta subunit family. Type 2 subfamily. Tetramer of two alpha and two beta subunits. Requires Mg(2+) as cofactor.

The protein resides in the cytoplasm. The catalysed reaction is tRNA(Phe) + L-phenylalanine + ATP = L-phenylalanyl-tRNA(Phe) + AMP + diphosphate + H(+). This is Phenylalanine--tRNA ligase beta subunit from Methanococcus maripaludis (strain DSM 14266 / JCM 13030 / NBRC 101832 / S2 / LL).